Consider the following 449-residue polypeptide: Trigger factor (449 aa).

The 72-residue stretch at 160 to 231 (TDQVTIEELG…VQSVQTKQLQ (72 aa)) folds into the PPIase FKBP-type domain. The tract at residues 411 to 449 (GQQVAGRQEAGAEQTAQAAEQESGQPQAEGEQAAEQRGE) is disordered. Low complexity predominate over residues 415–443 (AGRQEAGAEQTAQAAEQESGQPQAEGEQA).

It belongs to the FKBP-type PPIase family. Tig subfamily.

It is found in the cytoplasm. The enzyme catalyses [protein]-peptidylproline (omega=180) = [protein]-peptidylproline (omega=0). Involved in protein export. Acts as a chaperone by maintaining the newly synthesized protein in an open conformation. Functions as a peptidyl-prolyl cis-trans isomerase. The sequence is that of Trigger factor from Deinococcus geothermalis (strain DSM 11300 / CIP 105573 / AG-3a).